A 342-amino-acid chain; its full sequence is Protein-glutamate methylesterase/protein-glutamine glutaminase 1 (342 aa).

In terms of domain architecture, Response regulatory spans Arg2–Leu119. Asp53 carries the post-translational modification 4-aspartylphosphate. The CheB-type methylesterase domain occupies Ser146–Leu329. Catalysis depends on residues Ser158, His185, and Asp278.

Belongs to the CheB family. Phosphorylated by CheA. Phosphorylation of the N-terminal regulatory domain activates the methylesterase activity.

It is found in the cytoplasm. It carries out the reaction [protein]-L-glutamate 5-O-methyl ester + H2O = L-glutamyl-[protein] + methanol + H(+). The catalysed reaction is L-glutaminyl-[protein] + H2O = L-glutamyl-[protein] + NH4(+). Its function is as follows. Involved in chemotaxis. Part of a chemotaxis signal transduction system that modulates chemotaxis in response to various stimuli. Catalyzes the demethylation of specific methylglutamate residues introduced into the chemoreceptors (methyl-accepting chemotaxis proteins or MCP) by CheR. Also mediates the irreversible deamidation of specific glutamine residues to glutamic acid. This Bordetella avium (strain 197N) protein is Protein-glutamate methylesterase/protein-glutamine glutaminase 1.